Reading from the N-terminus, the 237-residue chain is Phosphatidylserine decarboxylase proenzyme (237 aa).

Ser206 acts as the Schiff-base intermediate with substrate; via pyruvic acid in catalysis. Ser206 is subject to Pyruvic acid (Ser); by autocatalysis.

It belongs to the phosphatidylserine decarboxylase family. PSD-A subfamily. Heterodimer of a large membrane-associated beta subunit and a small pyruvoyl-containing alpha subunit. It depends on pyruvate as a cofactor. Is synthesized initially as an inactive proenzyme. Formation of the active enzyme involves a self-maturation process in which the active site pyruvoyl group is generated from an internal serine residue via an autocatalytic post-translational modification. Two non-identical subunits are generated from the proenzyme in this reaction, and the pyruvate is formed at the N-terminus of the alpha chain, which is derived from the carboxyl end of the proenzyme. The post-translation cleavage follows an unusual pathway, termed non-hydrolytic serinolysis, in which the side chain hydroxyl group of the serine supplies its oxygen atom to form the C-terminus of the beta chain, while the remainder of the serine residue undergoes an oxidative deamination to produce ammonia and the pyruvoyl prosthetic group on the alpha chain.

The protein resides in the cell membrane. The catalysed reaction is a 1,2-diacyl-sn-glycero-3-phospho-L-serine + H(+) = a 1,2-diacyl-sn-glycero-3-phosphoethanolamine + CO2. The protein operates within phospholipid metabolism; phosphatidylethanolamine biosynthesis; phosphatidylethanolamine from CDP-diacylglycerol: step 2/2. Functionally, catalyzes the formation of phosphatidylethanolamine (PtdEtn) from phosphatidylserine (PtdSer). This chain is Phosphatidylserine decarboxylase proenzyme, found in Mycobacteroides abscessus (strain ATCC 19977 / DSM 44196 / CCUG 20993 / CIP 104536 / JCM 13569 / NCTC 13031 / TMC 1543 / L948) (Mycobacterium abscessus).